Here is a 118-residue protein sequence, read N- to C-terminus: Basic phospholipase A2 nigroxin B (118 aa).

7 cysteine pairs are disulfide-bonded: C11-C70, C25-C117, C27-C43, C42-C98, C49-C91, C59-C84, and C77-C89. Y26, G28, and G30 together coordinate Ca(2+). H46 is an active-site residue. D47 contacts Ca(2+). D92 is a catalytic residue.

This sequence belongs to the phospholipase A2 family. Group I subfamily. D49 sub-subfamily. It depends on Ca(2+) as a cofactor. Expressed by the venom gland.

It localises to the secreted. The enzyme catalyses a 1,2-diacyl-sn-glycero-3-phosphocholine + H2O = a 1-acyl-sn-glycero-3-phosphocholine + a fatty acid + H(+). Functionally, snake venom phospholipase A2 (PLA2) that has only a weak enzymatic activity. It has a myotoxic activity in vivo (dystrophic effect). PLA2 catalyzes the calcium-dependent hydrolysis of the 2-acyl groups in 3-sn-phosphoglycerides. The chain is Basic phospholipase A2 nigroxin B from Micrurus nigrocinctus (Central American coral snake).